The sequence spans 301 residues: Ribosomal RNA small subunit methyltransferase A (301 aa).

Residues N18, L20, G45, E66, D91, and N112 each contribute to the S-adenosyl-L-methionine site. A disordered region spans residues 267–301 (PPEAAPVKEKRRMAKNKMTEPANNNLNENSAPEVD). Over residues 287–301 (PANNNLNENSAPEVD) the composition is skewed to polar residues.

The protein belongs to the class I-like SAM-binding methyltransferase superfamily. rRNA adenine N(6)-methyltransferase family. RsmA subfamily.

Its subcellular location is the cytoplasm. It catalyses the reaction adenosine(1518)/adenosine(1519) in 16S rRNA + 4 S-adenosyl-L-methionine = N(6)-dimethyladenosine(1518)/N(6)-dimethyladenosine(1519) in 16S rRNA + 4 S-adenosyl-L-homocysteine + 4 H(+). In terms of biological role, specifically dimethylates two adjacent adenosines (A1518 and A1519) in the loop of a conserved hairpin near the 3'-end of 16S rRNA in the 30S particle. May play a critical role in biogenesis of 30S subunits. The polypeptide is Ribosomal RNA small subunit methyltransferase A (Colwellia psychrerythraea (strain 34H / ATCC BAA-681) (Vibrio psychroerythus)).